The chain runs to 522 residues: 4-chlorobenzoate--CoA ligase (522 aa).

ATP contacts are provided by residues 161 to 169 (TSGTTGLPK), 300 to 305 (DIYGTT), and N410.

This sequence belongs to the ATP-dependent AMP-binding enzyme family. As to quaternary structure, homodimer. Mg(2+) serves as cofactor.

It carries out the reaction 4-chlorobenzoate + ATP + CoA = 4-chlorobenzoyl-CoA + AMP + diphosphate. It participates in xenobiotic degradation; 4-chlorobenzoate degradation; 4-hydroxybenzoate from 4-chlorobenzoate: step 2/3. Functionally, catalyzes the formation of chlorobenzoyl-CoA via a 2 step reaction. First 4-chlorobenzoate is adenylated by ATP, followed by acyl transfer from the 4-chlorobenzoyl-AMP intermediate to CoA. Benzoate, 4-bromobenzoate, 4-iodobenzoate and 4-fluorobenzoate also act as substrates. Inactive towards 4-nitrobenzoate. The polypeptide is 4-chlorobenzoate--CoA ligase (Arthrobacter sp).